The chain runs to 275 residues: Large ribosomal subunit protein uL2 (275 aa).

A disordered region spans residues 223-275 (VAMNPVDHPHGGGEGRTSGGRHPVSPWGQPTKGYKTRSNKRTDKYIVRRRNKK).

This sequence belongs to the universal ribosomal protein uL2 family. As to quaternary structure, part of the 50S ribosomal subunit. Forms a bridge to the 30S subunit in the 70S ribosome.

In terms of biological role, one of the primary rRNA binding proteins. Required for association of the 30S and 50S subunits to form the 70S ribosome, for tRNA binding and peptide bond formation. It has been suggested to have peptidyltransferase activity; this is somewhat controversial. Makes several contacts with the 16S rRNA in the 70S ribosome. The chain is Large ribosomal subunit protein uL2 from Shewanella pealeana (strain ATCC 700345 / ANG-SQ1).